The sequence spans 596 residues: MKHIRNFSIIAHIDHGKSTLSDRLIQVCGGLTDREMDSQVLDSMDLERERGITIKAQSVTLDYKAKDGQVYQLNFIDTPGHVDFSYEVSRSLAACEGALLVVDAGQGVEAQTLANCYTALDMNLDVVPILNKIDLPQADPERVAAEIEDIVGIDAMDAVRCSAKTGVGVDDVLEVIVAKIPPPEGDPDAPLQALIIDSWFDNYLGVVSLVRIKHGSLKKGDKFKVMSTGQNHTADRVGIFTPKQTDKTELKTGEVGFVIAGLKEIHGAPVGDTLTLAKNGADKPLPGFKKVKPQVYAGVFPISTDEYENFRDALNKLSLNDASLFFEPESSSALGFGFRIGYLGLLHMEIVQERLEREYNLELITTAPTVVYEVVMTNGETIYVDNPSDLPAINNIEEMREPIVEANILVPKEYLGNVITLCIEKRGTQVNMVYHGNQVAVTYHLPMAEVVMDFFDRLKSTSRGYASLEYNFIRFDPADMVRLDILINGDRVDALAMVIHRSNIRHRGLALVEKMKELIPRQMFDIAIQAAVGSQIIARSTVKALRKDVTAKCYGGDVSRKKKLLNKQKEGKKRMKQVGNVEVPQEAFLAVLKLNE.

In terms of domain architecture, tr-type G spans 2–184 (KHIRNFSIIA…VIVAKIPPPE (183 aa)). Residues 14–19 (DHGKST) and 131–134 (NKID) contribute to the GTP site.

This sequence belongs to the TRAFAC class translation factor GTPase superfamily. Classic translation factor GTPase family. LepA subfamily.

It localises to the cell inner membrane. The enzyme catalyses GTP + H2O = GDP + phosphate + H(+). Its function is as follows. Required for accurate and efficient protein synthesis under certain stress conditions. May act as a fidelity factor of the translation reaction, by catalyzing a one-codon backward translocation of tRNAs on improperly translocated ribosomes. Back-translocation proceeds from a post-translocation (POST) complex to a pre-translocation (PRE) complex, thus giving elongation factor G a second chance to translocate the tRNAs correctly. Binds to ribosomes in a GTP-dependent manner. The chain is Elongation factor 4 from Shewanella putrefaciens (strain CN-32 / ATCC BAA-453).